The following is a 181-amino-acid chain: Ribose 1,5-bisphosphate phosphokinase PhnN (181 aa).

ATP is bound at residue 12–19 (GPSGAGKD).

The protein belongs to the ribose 1,5-bisphosphokinase family.

It catalyses the reaction alpha-D-ribose 1,5-bisphosphate + ATP = 5-phospho-alpha-D-ribose 1-diphosphate + ADP. Its pathway is metabolic intermediate biosynthesis; 5-phospho-alpha-D-ribose 1-diphosphate biosynthesis; 5-phospho-alpha-D-ribose 1-diphosphate from D-ribose 5-phosphate (route II): step 3/3. Its function is as follows. Catalyzes the phosphorylation of ribose 1,5-bisphosphate to 5-phospho-D-ribosyl alpha-1-diphosphate (PRPP). This is Ribose 1,5-bisphosphate phosphokinase PhnN from Acidiphilium cryptum (strain JF-5).